A 318-amino-acid polypeptide reads, in one-letter code: Acetyl-coenzyme A carboxylase carboxyl transferase subunit alpha (318 aa).

Residues 34–295 (DIEDQISQLR…KQAIKKDLSE (262 aa)) enclose the CoA carboxyltransferase C-terminal domain.

The protein belongs to the AccA family. In terms of assembly, acetyl-CoA carboxylase is a heterohexamer composed of biotin carboxyl carrier protein (AccB), biotin carboxylase (AccC) and two subunits each of ACCase subunit alpha (AccA) and ACCase subunit beta (AccD).

It localises to the cytoplasm. It catalyses the reaction N(6)-carboxybiotinyl-L-lysyl-[protein] + acetyl-CoA = N(6)-biotinyl-L-lysyl-[protein] + malonyl-CoA. The protein operates within lipid metabolism; malonyl-CoA biosynthesis; malonyl-CoA from acetyl-CoA: step 1/1. Its function is as follows. Component of the acetyl coenzyme A carboxylase (ACC) complex. First, biotin carboxylase catalyzes the carboxylation of biotin on its carrier protein (BCCP) and then the CO(2) group is transferred by the carboxyltransferase to acetyl-CoA to form malonyl-CoA. This is Acetyl-coenzyme A carboxylase carboxyl transferase subunit alpha from Colwellia psychrerythraea (strain 34H / ATCC BAA-681) (Vibrio psychroerythus).